Reading from the N-terminus, the 219-residue chain is Ribose-5-phosphate isomerase A (219 aa).

Substrate contacts are provided by residues 29–32 (TGST), 82–85 (DGAD), and 95–98 (KGGG). Glu-104 functions as the Proton acceptor in the catalytic mechanism. Residue Lys-122 participates in substrate binding.

It belongs to the ribose 5-phosphate isomerase family. Homodimer.

The enzyme catalyses aldehydo-D-ribose 5-phosphate = D-ribulose 5-phosphate. It functions in the pathway carbohydrate degradation; pentose phosphate pathway; D-ribose 5-phosphate from D-ribulose 5-phosphate (non-oxidative stage): step 1/1. Functionally, catalyzes the reversible conversion of ribose-5-phosphate to ribulose 5-phosphate. This Chromobacterium violaceum (strain ATCC 12472 / DSM 30191 / JCM 1249 / CCUG 213 / NBRC 12614 / NCIMB 9131 / NCTC 9757 / MK) protein is Ribose-5-phosphate isomerase A.